A 391-amino-acid chain; its full sequence is Phosphoglycerate kinase (391 aa).

Substrate is bound by residues 21 to 23, arginine 36, 59 to 62, arginine 113, and arginine 146; these read DLN and HLGR. ATP-binding positions include lysine 197, glutamate 319, and 345 to 348; that span reads GGDT.

The protein belongs to the phosphoglycerate kinase family. In terms of assembly, monomer.

It localises to the cytoplasm. It catalyses the reaction (2R)-3-phosphoglycerate + ATP = (2R)-3-phospho-glyceroyl phosphate + ADP. Its pathway is carbohydrate degradation; glycolysis; pyruvate from D-glyceraldehyde 3-phosphate: step 2/5. This chain is Phosphoglycerate kinase, found in Pseudoalteromonas atlantica (strain T6c / ATCC BAA-1087).